Reading from the N-terminus, the 91-residue chain is Small ribosomal subunit protein uS19 (91 aa).

The protein belongs to the universal ribosomal protein uS19 family.

Functionally, protein S19 forms a complex with S13 that binds strongly to the 16S ribosomal RNA. The polypeptide is Small ribosomal subunit protein uS19 (Pseudomonas fluorescens (strain Pf0-1)).